A 57-amino-acid polypeptide reads, in one-letter code: uncharacterized protein (57 aa).

The segment at 1 to 57 is disordered; it reads MITPIGKNSNSNSNSNSNSNSNSNSNSNSNSNSNSNSNSNSNSNSNSNSNSNSNSNN. Residues 8–57 show a composition bias toward low complexity; that stretch reads NSNSNSNSNSNSNSNSNSNSNSNSNSNSNSNSNSNSNSNSNSNSNSNSNN.

This is an uncharacterized protein from Dictyostelium discoideum (Social amoeba).